Here is a 136-residue protein sequence, read N- to C-terminus: Large ribosomal subunit protein uL16c (136 aa).

This sequence belongs to the universal ribosomal protein uL16 family. Part of the 50S ribosomal subunit.

Its subcellular location is the plastid. The protein localises to the chloroplast. This is Large ribosomal subunit protein uL16c from Phaseolus angularis (Azuki bean).